We begin with the raw amino-acid sequence, 484 residues long: MARPLQRPAGLGPFVLLWLLLPAPSGRGVQAGRAWPVPRCPAACEPTRCPPLPRCSVGTAPVLDRCGCCRVCAAAEGEACGGPLGRPCAPGLQCLAPRAPRLLGGRPLGTCGCPAAGATVCGSDGRTYRSLCALRAENRAARLRGALPAVPVQKGDCGDPGTGSAGWLRNKFNFIASVVEKVAPSVVHLQLFRRDRSPLGSEDVPVSSASGFIVSEDGLIVTNAHVLTNQQRIQVELQSGVQYEATVKDVDHKLDLALIKIEPNADLPVLLLGKSSDLRAGEFVVALGSPFSLQNTVTAGIVSTTQRGGKELGLKDSDMDYIQTDAIINHGNSGGPLVNLDGDVIGINTLKVTAGISFAIPSDRIRQFLAEFHERQLKGKALSQKKYLGLRMLPLTMNLLQEMKRQDPEFPDVASGVFVHEVIQGTAAESSGLKDHDVIVSINGLPVTTTTDVIEAVKANDSLSLLVRRKSQTLILTVTPEIIN.

Residues 1–28 form the signal peptide; sequence MARPLQRPAGLGPFVLLWLLLPAPSGRG. The 79-residue stretch at 36–114 folds into the IGFBP N-terminal domain; sequence PVPRCPAACE…GRPLGTCGCP (79 aa). Cystine bridges form between cysteine 40–cysteine 66, cysteine 44–cysteine 68, cysteine 49–cysteine 69, cysteine 55–cysteine 72, cysteine 80–cysteine 94, cysteine 88–cysteine 111, cysteine 113–cysteine 132, and cysteine 121–cysteine 157. Residues 105–159 form the Kazal-like domain; it reads GRPLGTCGCPAAGATVCGSDGRTYRSLCALRAENRAARLRGALPAVPVQKGDCGD. The segment at 209 to 369 is serine protease; it reads ASGFIVSEDG…IPSDRIRQFL (161 aa). Catalysis depends on charge relay system residues histidine 225, aspartate 255, and serine 333. The PDZ domain maps to 390–472; sequence LRMLPLTMNL…LSLLVRRKSQ (83 aa).

Belongs to the peptidase S1C family.

It localises to the secreted. Serine protease. In Bos taurus (Bovine), this protein is Serine protease HTR4 (HTRA4).